Reading from the N-terminus, the 256-residue chain is Thiazole synthase (256 aa).

Lys-98 acts as the Schiff-base intermediate with DXP in catalysis. 1-deoxy-D-xylulose 5-phosphate is bound by residues Gly-159, 185–186 (AG), and 207–208 (NT).

Belongs to the ThiG family. Homotetramer. Forms heterodimers with either ThiH or ThiS.

It is found in the cytoplasm. It catalyses the reaction [ThiS sulfur-carrier protein]-C-terminal-Gly-aminoethanethioate + 2-iminoacetate + 1-deoxy-D-xylulose 5-phosphate = [ThiS sulfur-carrier protein]-C-terminal Gly-Gly + 2-[(2R,5Z)-2-carboxy-4-methylthiazol-5(2H)-ylidene]ethyl phosphate + 2 H2O + H(+). Its pathway is cofactor biosynthesis; thiamine diphosphate biosynthesis. Its function is as follows. Catalyzes the rearrangement of 1-deoxy-D-xylulose 5-phosphate (DXP) to produce the thiazole phosphate moiety of thiamine. Sulfur is provided by the thiocarboxylate moiety of the carrier protein ThiS. In vitro, sulfur can be provided by H(2)S. This is Thiazole synthase from Aliivibrio salmonicida (strain LFI1238) (Vibrio salmonicida (strain LFI1238)).